Consider the following 512-residue polypeptide: Immunoglobulin delta heavy chain (512 aa).

Ig-like domains are found at residues 1-97 (RLQL…MYYC) and 135-227 (PDVF…KEIF). The tract at residues 1 to 129 (RLQLQESGPG…GQGTTVHVSS (129 aa)) is variable (V) domain, involved in antigen recognition. Cystine bridges form between Cys-22–Cys-97 and Cys-157–Cys-213. The tract at residues 130–512 (APTKAPDVFP…VSYVTDHGPM (383 aa)) is constant (C) domain. Residues 225-296 (EIFRWPESPK…TPECPSHTQP (72 aa)) form a disordered region. A compositionally biased stretch (polar residues) spans 235–247 (AQASSVPTAQPQA). The O-linked (GalNAc...) serine glycan is linked to Ser-238. O-linked (GalNAc...) threonine glycosylation is found at Thr-255, Thr-256, Thr-260, and Thr-261. Over residues 267–287 (GGEEKKKEKEKEEQEERETKT) the composition is skewed to basic and acidic residues. Ig-like domains lie at 304–392 (PAVQ…RLMA) and 396–502 (PAAQ…RSLE). Intrachain disulfides connect Cys-319/Cys-378 and Cys-423/Cys-484. Residues Asn-354, Asn-445, and Asn-496 are each glycosylated (N-linked (GlcNAc...) asparagine).

Immunoglobulins are composed of two identical heavy chains and two identical light chains; disulfide-linked. An IgD molecule contains thus a delta heavy chain combined with either a kappa or a lambda light chains. Kappa light chains are found predominantly on the membrane IgD (mIgD) form and lambda on the secreted IgD (sIgD) form, this fact is poorly understood. Membrane-bound IgD molecules are non-covalently associated with a heterodimer of CD79A and CD79B.

It localises to the secreted. It is found in the cell membrane. Immunoglobulins, also known as antibodies, are membrane-bound or secreted glycoproteins produced by B lymphocytes. In the recognition phase of humoral immunity, the membrane-bound immunoglobulins serve as receptors which, upon binding of a specific antigen, trigger the clonal expansion and differentiation of B lymphocytes into immunoglobulins-secreting plasma cells. Secreted immunoglobulins mediate the effector phase of humoral immunity, which results in the elimination of bound antigens. The antigen binding site is formed by the variable domain of one heavy chain, together with that of its associated light chain. Thus, each immunoglobulin has two antigen binding sites with remarkable affinity for a particular antigen. The variable domains are assembled by a process called V-(D)-J rearrangement and can then be subjected to somatic hypermutations which, after exposure to antigen and selection, allow affinity maturation for a particular antigen. IgD is the major antigen receptor isotype on the surface of most peripheral B cells, where it is coexpressed with IgM. The membrane-bound IgD (mIgD) induces the phosphorylation of CD79A and CD79B by the Src family of protein tyrosine kinases. Soluble IgD (sIgD) concentration in serum is below those of IgG, IgA, and IgM but much higher than that of IgE. IgM and IgD molecules present on B cells have identical V regions and antigen-binding sites. After the antigen binds to the B cell receptor, the secreted form sIgD is shut off. IgD is a potent inducer of TNF, IL1B, and IL1RN. IgD also induces release of IL6, IL10, and LIF from peripheral blood mononuclear cells. Monocytes seem to be the main producers of cytokines in vitro in the presence of IgD. The polypeptide is Immunoglobulin delta heavy chain (Homo sapiens (Human)).